Reading from the N-terminus, the 141-residue chain is Lutropin subunit beta (141 aa).

The N-terminal stretch at 1-22 (MERYQELTVLLLLLLLEGGSWG) is a signal peptide. Disulfide bonds link C30–C78, C44–C93, C47–C131, C55–C109, C59–C111, and C114–C121. The N-linked (GlcNAc...) asparagine glycan is linked to N34.

This sequence belongs to the glycoprotein hormones subunit beta family. Heterodimer of a common alpha chain and a unique beta chain which confers biological specificity to thyrotropin, lutropin, follitropin and gonadotropin.

The protein resides in the secreted. In terms of biological role, promotes spermatogenesis and ovulation by stimulating the testes and ovaries to synthesize steroids. The sequence is that of Lutropin subunit beta (LHB) from Trichosurus vulpecula (Brush-tailed possum).